Reading from the N-terminus, the 103-residue chain is N(4)-acetylcytidine amidohydrolase (103 aa).

Residues 6-101 form the ASCH domain; it reads ITFFQRFQDD…QTQFYVIEFK (96 aa). The Proton acceptor role is filled by Lys-21. The Nucleophile role is filled by Thr-24. The active-site Proton donor is the Glu-74.

It belongs to the N(4)-acetylcytidine amidohydrolase family.

It catalyses the reaction N(4)-acetylcytidine + H2O = cytidine + acetate + H(+). The enzyme catalyses N(4)-acetyl-2'-deoxycytidine + H2O = 2'-deoxycytidine + acetate + H(+). The catalysed reaction is N(4)-acetylcytosine + H2O = cytosine + acetate + H(+). Functionally, catalyzes the hydrolysis of N(4)-acetylcytidine (ac4C). This is N(4)-acetylcytidine amidohydrolase (yqfB) from Escherichia coli (strain SE11).